The chain runs to 529 residues: MTLSPYLKEVAKRRTFAIISHPDAGKTTITEKVLLFGQAIQTAGTVKGRGSNQHAKSDWMEMEKQRGISITTSVMQFPYHDCLVNLLDTPGHEDFSEDTYRTLTAVDCCLMVIDAAKGVEDRTRKLMEVTRLRDTPILTFMNKLDRDIRDPMELLDEVENELKIGCAPITWPIGCGKLFKGVYHLYKDETYLYQSGKGHTIQEVRIVKGLNNPDLDAAVGEDLAQQLRDELELVKGGSNEFDKELFLAGEITPVFFGTALGNFGVDHMLNGLVEWAPAPMPRQTDTRTVEASEDKFTGFVFKIQANMDPKHRDRVAFMRVVSGKYEKGMKLRQVRTAKDVVISDALTFMAGDRSHVEEAYPGDILGLHNHGTIQIGDTFTQGEMMKFTGIPNFAPELFRRIRLKDPLKQKQLLKGLVQLSEEGAVQVFRPISNNDLIVGAVGVLQFDVVVARLKSEYNVEAVYESVNVATARWVECADAKKFEEFKRKNESQLALDGGDNLAYIATSMVNLRLAQERYPDVQFHQTREH.

Residues 11–280 (AKRRTFAIIS…GLVEWAPAPM (270 aa)) enclose the tr-type G domain. Residues 20 to 27 (SHPDAGKT), 88 to 92 (DTPGH), and 142 to 145 (NKLD) each bind GTP.

It belongs to the TRAFAC class translation factor GTPase superfamily. Classic translation factor GTPase family. PrfC subfamily.

The protein resides in the cytoplasm. Functionally, increases the formation of ribosomal termination complexes and stimulates activities of RF-1 and RF-2. It binds guanine nucleotides and has strong preference for UGA stop codons. It may interact directly with the ribosome. The stimulation of RF-1 and RF-2 is significantly reduced by GTP and GDP, but not by GMP. This Shigella flexneri serotype 5b (strain 8401) protein is Peptide chain release factor 3.